Consider the following 415-residue polypeptide: Secernin-2 (415 aa).

Cys8 is a catalytic residue.

This sequence belongs to the peptidase C69 family. Secernin subfamily.

This chain is Secernin-2 (scrn2), found in Danio rerio (Zebrafish).